The sequence spans 183 residues: Large ribosomal subunit protein uL6 (183 aa).

The protein belongs to the universal ribosomal protein uL6 family. Part of the 50S ribosomal subunit.

This protein binds to the 23S rRNA, and is important in its secondary structure. It is located near the subunit interface in the base of the L7/L12 stalk, and near the tRNA binding site of the peptidyltransferase center. The polypeptide is Large ribosomal subunit protein uL6 (Mycoplasmoides gallisepticum (strain R(low / passage 15 / clone 2)) (Mycoplasma gallisepticum)).